Reading from the N-terminus, the 200-residue chain is Probable UbiX-like flavin prenyltransferase (200 aa).

FMN-binding positions include 9 to 11 (GAT), serine 36, 87 to 90 (SMKT), and arginine 122.

Belongs to the UbiX/PAD1 family. YclB subfamily. In terms of assembly, homododecamer.

The enzyme catalyses dimethylallyl phosphate + FMNH2 = prenylated FMNH2 + phosphate. Its function is as follows. Involved in the non-oxidative decarboxylation and detoxification of phenolic derivatives under both aerobic and anaerobic conditions. Flavin prenyltransferase that catalyzes the synthesis of the prenylated FMN cofactor (prenyl-FMN) for phenolic acid decarboxylase. The protein is Probable UbiX-like flavin prenyltransferase of Streptomyces sp. (strain D7).